Consider the following 423-residue polypeptide: Alpha-1-antichymotrypsin (423 aa).

The signal sequence occupies residues 1–23; sequence MERMLPFLALGLLVAGFCPAVLC. Asparagine 93, asparagine 106, asparagine 127, asparagine 186, and asparagine 271 each carry an N-linked (GlcNAc...) asparagine glycan. The RCL stretch occupies residues 369–394; sequence GTEASAATAVKITLLSALVDPMTIVR.

This sequence belongs to the serpin family. Interacts with DNAJC1. In terms of tissue distribution, plasma.

Its subcellular location is the secreted. Although its physiological function is unclear, it can inhibit neutrophil cathepsin G and mast cell chymase, both of which can convert angiotensin-1 to the active angiotensin-2. The polypeptide is Alpha-1-antichymotrypsin (SERPINA3) (Pongo abelii (Sumatran orangutan)).